A 1214-amino-acid polypeptide reads, in one-letter code: Neuronal cell adhesion molecule (1214 aa).

An N-terminal signal peptide occupies residues 1 to 29 (MQLKTMPKKKPLSAGRAPLFLFLCQMISA). Residues 30–1077 (LDVPLDPKLL…ASRQVDIATQ (1048 aa)) are Extracellular-facing. 2 Ig-like C2-type domains span residues 46–134 (PTIT…AAVS) and 141–235 (PSRS…QPIS). 2 disulfide bridges follow: Cys68–Cys123 and Cys167–Cys218. N-linked (GlcNAc...) asparagine glycosylation occurs at Asn83. Residues Asn223, Asn245, Asn251, Asn276, Asn314, and Asn377 are each glycosylated (N-linked (GlcNAc...) asparagine). Ig-like C2-type domains are found at residues 267–356 (PPTF…ISVT), 361–448 (PYWI…AFVN), 454–541 (PRIL…VHLE), and 545–626 (PTRF…DSVS). The cysteines at positions 292 and 340 are disulfide-linked. Cys382 and Cys432 are oxidised to a cystine. N-linked (GlcNAc...) asparagine glycosylation is found at Asn433 and Asn507. Disulfide bonds link Cys476/Cys525 and Cys567/Cys616. N-linked (GlcNAc...) asparagine glycosylation is found at Asn619, Asn716, Asn802, Asn858, Asn993, Asn1009, and Asn1019. Fibronectin type-III domains are found at residues 649–744 (PPFD…TKAA), 746–843 (PDQN…SGED), 848–950 (APGN…TPEG), and 954–1051 (APSS…VDEG). Residues 1078–1100 (GWFIGLMCAVALLILILLIVCFI) traverse the membrane as a helical segment. Topologically, residues 1101 to 1214 (RRNKGGKYPV…SPVNAMNSFV (114 aa)) are cytoplasmic. A compositionally biased stretch (basic and acidic residues) spans 1109–1129 (PVKEKEDAHADPEIQPMKEDD). A disordered region spans residues 1109–1214 (PVKEKEDAHA…SPVNAMNSFV (106 aa)). Phosphothreonine is present on Thr1131. Phosphotyrosine is present on Tyr1135. Position 1136 is a phosphoserine (Ser1136). The segment covering 1151–1160 (PSDRTVKKED) has biased composition (basic and acidic residues). Phosphoserine occurs at positions 1161, 1164, 1181, 1200, 1201, and 1205. Polar residues predominate over residues 1198-1214 (NESSEAPSPVNAMNSFV).

The protein belongs to the immunoglobulin superfamily. L1/neurofascin/NgCAM family. As to quaternary structure, constituent of a NFASC/NRCAM/ankyrin-G complex. Detected in a complex with CNTN1 and PTPRB. Interacts with MYOC. Interacts with GLDN. In terms of tissue distribution, detected in cerebellum Purkinje cells. Detected on nodes of Ranvier and unmyelinated axons in sciatic nerve (at protein level).

The protein resides in the cell membrane. It is found in the cell projection. Its subcellular location is the axon. The protein localises to the secreted. In terms of biological role, cell adhesion protein that is required for normal responses to cell-cell contacts in brain and in the peripheral nervous system. Plays a role in neurite outgrowth in response to contactin binding. Plays a role in mediating cell-cell contacts between Schwann cells and axons. Plays a role in the formation and maintenance of the nodes of Ranvier on myelinated axons. Nodes of Ranvier contain clustered sodium channels that are crucial for the saltatory propagation of action potentials along myelinated axons. During development, nodes of Ranvier are formed by the fusion of two heminodes. Required for normal clustering of sodium channels at heminodes; not required for the formation of mature nodes with normal sodium channel clusters. Required, together with GLDN, for maintaining NFASC and sodium channel clusters at mature nodes of Ranvier. This chain is Neuronal cell adhesion molecule (Nrcam), found in Rattus norvegicus (Rat).